Reading from the N-terminus, the 174-residue chain is Guided entry of tail-anchored proteins factor 1 (174 aa).

Topologically, residues 1–8 (MSSAAADH) are lumenal. A helical membrane pass occupies residues 9–29 (WAWLLVLSFVFGCNVLRILLP). At 30–99 (SFSSFMSRVL…VKARTAQLAK (70 aa)) the chain is on the cytoplasmic side. A coiled-coil region spans residues 39 to 94 (LQKDAEQESQMRAEIQDMKQELSTVNMMDEFARYARLERKINKMTDKLKTHVKART). The interval 39 to 97 (LQKDAEQESQMRAEIQDMKQELSTVNMMDEFARYARLERKINKMTDKLKTHVKARTAQL) is interaction with GET3/TRC40. Residues 100-120 (IKWVISVAFYVLQAALMISLI) traverse the membrane as a helical segment. The Lumenal portion of the chain corresponds to 121-148 (WKYYSVPVAVVPSKWITPLDRLVAFPTR). A helical transmembrane segment spans residues 149 to 169 (VAGGVGITCWILVCNKVVAIV). Topologically, residues 170–174 (LHPFS) are cytoplasmic.

It belongs to the WRB/GET1 family. In terms of assembly, component of the Golgi to ER traffic (GET) complex, which is composed of GET1/WRB, CAMLG/GET2 and GET3/TRC40. Within the complex, GET1 and CAMLG form a heterotetramer which is stabilized by phosphatidylinositol binding and which binds to the GET3 homodimer. Interacts with CAMLG (via C-terminus). GET3 shows a higher affinity for CAMLG than for GET1.

The protein resides in the endoplasmic reticulum membrane. In terms of biological role, required for the post-translational delivery of tail-anchored (TA) proteins to the endoplasmic reticulum (ER). Together with CAMLG/GET2, acts as a membrane receptor for soluble GET3/TRC40, which recognizes and selectively binds the transmembrane domain of TA proteins in the cytosol. Required to ensure correct topology and ER insertion of CAMLG. The polypeptide is Guided entry of tail-anchored proteins factor 1 (Homo sapiens (Human)).